Reading from the N-terminus, the 303-residue chain is Aspartate carbamoyltransferase catalytic subunit (303 aa).

Positions 49 and 50 each coordinate carbamoyl phosphate. Lysine 77 is an L-aspartate binding site. Arginine 99, histidine 126, and glutamine 129 together coordinate carbamoyl phosphate. The L-aspartate site is built by arginine 159 and arginine 211. Residues serine 252 and proline 253 each contribute to the carbamoyl phosphate site.

This sequence belongs to the aspartate/ornithine carbamoyltransferase superfamily. ATCase family. As to quaternary structure, heterododecamer (2C3:3R2) of six catalytic PyrB chains organized as two trimers (C3), and six regulatory PyrI chains organized as three dimers (R2).

The catalysed reaction is carbamoyl phosphate + L-aspartate = N-carbamoyl-L-aspartate + phosphate + H(+). It functions in the pathway pyrimidine metabolism; UMP biosynthesis via de novo pathway; (S)-dihydroorotate from bicarbonate: step 2/3. Catalyzes the condensation of carbamoyl phosphate and aspartate to form carbamoyl aspartate and inorganic phosphate, the committed step in the de novo pyrimidine nucleotide biosynthesis pathway. The chain is Aspartate carbamoyltransferase catalytic subunit from Listeria monocytogenes serotype 4b (strain F2365).